A 199-amino-acid chain; its full sequence is MLTRPREIYLATAVSIGILLSLIAPLGPPLARADGTSQLAELVDAAAERLEVADPVAAFKWRAQLPIEDSGRVEQQLAKLGEDARSQHIDPDYVTRVFDDQIRATEAIEYSRFSDWKLNPASAPPEPPDLSASRSAIDSLNNRMLSQIWSHWSLLSAPSCAAQLDRAKRDIVRSRHLDSLYQRALTTATQSYCQALPPA.

The first 33 residues, 1 to 33 (MLTRPREIYLATAVSIGILLSLIAPLGPPLARA), serve as a signal peptide directing secretion. Residues 34–113 (DGTSQLAELV…ATEAIEYSRF (80 aa)) form the Chorismate mutase domain. Substrate contacts are provided by residues arginine 49, lysine 60, aspartate 69, 72 to 76 (RVEQQ), 105 to 109 (TEAIE), and arginine 134. Residues cysteine 160 and cysteine 193 are joined by a disulfide bond.

As to quaternary structure, homodimer.

The protein resides in the secreted. The catalysed reaction is chorismate = prephenate. It participates in metabolic intermediate biosynthesis; prephenate biosynthesis; prephenate from chorismate: step 1/1. Tyrosine, phenylalanine, and tryptophan moderately enhance chorismate mutase activity at low concentrations, but allosterically inhibit the enzyme at higher concentrations. Functionally, catalyzes the Claisen rearrangement of chorismate to prephenate. May play some role in the pathogenicity. In Mycobacterium tuberculosis (strain ATCC 25618 / H37Rv), this protein is Secreted chorismate mutase.